Consider the following 369-residue polypeptide: MTATPVYFDISCNGKPKGRVVFKLYDDVVPKTAANFRSLCTGDKGISPKSGKPLSYKDSIFHRVIKDFMCQGGDFTAPSDHLGTGGESIYGEKFEDENFKLNHNKPFLLSMANSGPNTNGSQFFITTVPTPHLDGKHVVFGEVIEGKSIVRQLERSEKGANDRPVEDWKIADCGELPANYEPVASGADDGTGDTYEEILTDNDTIDINNPQSVFAAVSKIKDIGTKLLKEGKLEKSYEKYTKANSYLNDYFPEGLSPEDLSTLHGLKLSCYLNAALVALKLKHGKDAIAAANNALEVEQIDDKSKTKALYRKGMGYILVKDEEQAQKILEEALELEPNDAAIQKGLQEAKHNIKLRRDKQKKAMAKFFS.

In terms of domain architecture, PPIase cyclophilin-type spans 7–175 (YFDISCNGKP…EDWKIADCGE (169 aa)). TPR repeat units follow at residues 217–250 (VSKIKDIGTKLLKEGKLEKSYEKYTKANSYLNDY), 268–301 (LSCYLNAALVALKLKHGKDAIAAANNALEVEQID), and 306–339 (TKALYRKGMGYILVKDEEQAQKILEEALELEPND).

The protein belongs to the cyclophilin-type PPIase family. PPIase D subfamily.

It is found in the cytoplasm. It carries out the reaction [protein]-peptidylproline (omega=180) = [protein]-peptidylproline (omega=0). In terms of biological role, PPIases accelerate the folding of proteins. It catalyzes the cis-trans isomerization of proline imidic peptide bonds in oligopeptides. This Candida albicans (strain SC5314 / ATCC MYA-2876) (Yeast) protein is Peptidyl-prolyl cis-trans isomerase D (CPR6).